Consider the following 289-residue polypeptide: Oxaloacetate decarboxylase (289 aa).

Position 50 (serine 50) interacts with substrate. Aspartate 88 is a binding site for Mg(2+). Residues arginine 159 and histidine 235 each coordinate substrate.

The protein belongs to the isocitrate lyase/PEP mutase superfamily. Oxaloacetate decarboxylase family. As to quaternary structure, homotetramer; dimer of dimers. Requires Mg(2+) as cofactor.

It catalyses the reaction oxaloacetate + H(+) = pyruvate + CO2. Its function is as follows. Catalyzes the decarboxylation of oxaloacetate into pyruvate. Seems to play a role in maintaining cellular concentrations of bicarbonate and pyruvate. In Pseudomonas entomophila (strain L48), this protein is Oxaloacetate decarboxylase.